Here is a 138-residue protein sequence, read N- to C-terminus: NADH-quinone oxidoreductase subunit A (138 aa).

Transmembrane regions (helical) follow at residues 8–28 (FGAV…GYLT), 63–83 (FYVV…LFPW), and 93–113 (FALI…AYAW).

The protein belongs to the complex I subunit 3 family. NDH-1 is composed of 14 different subunits. Subunits NuoA, H, J, K, L, M, N constitute the membrane sector of the complex.

The protein resides in the cell inner membrane. It catalyses the reaction a quinone + NADH + 5 H(+)(in) = a quinol + NAD(+) + 4 H(+)(out). Its function is as follows. NDH-1 shuttles electrons from NADH, via FMN and iron-sulfur (Fe-S) centers, to quinones in the respiratory chain. The immediate electron acceptor for the enzyme in this species is believed to be a menaquinone. Couples the redox reaction to proton translocation (for every two electrons transferred, four hydrogen ions are translocated across the cytoplasmic membrane), and thus conserves the redox energy in a proton gradient. The protein is NADH-quinone oxidoreductase subunit A of Prosthecochloris aestuarii (strain DSM 271 / SK 413).